A 436-amino-acid chain; its full sequence is ATP-dependent protease ATPase subunit HslU (436 aa).

ATP contacts are provided by residues Ile-19, 61 to 65 (GVGKT), Asp-249, Glu-314, and Arg-386.

The protein belongs to the ClpX chaperone family. HslU subfamily. A double ring-shaped homohexamer of HslV is capped on each side by a ring-shaped HslU homohexamer. The assembly of the HslU/HslV complex is dependent on binding of ATP.

It is found in the cytoplasm. In terms of biological role, ATPase subunit of a proteasome-like degradation complex; this subunit has chaperone activity. The binding of ATP and its subsequent hydrolysis by HslU are essential for unfolding of protein substrates subsequently hydrolyzed by HslV. HslU recognizes the N-terminal part of its protein substrates and unfolds these before they are guided to HslV for hydrolysis. This chain is ATP-dependent protease ATPase subunit HslU, found in Bartonella henselae (strain ATCC 49882 / DSM 28221 / CCUG 30454 / Houston 1) (Rochalimaea henselae).